Reading from the N-terminus, the 318-residue chain is Replication factor C small subunit (318 aa).

43–50 (GSVGTGKT) is a binding site for ATP.

The protein belongs to the activator 1 small subunits family. RfcS subfamily. In terms of assembly, heteromultimer composed of small subunits (RfcS) and large subunits (RfcL).

Part of the RFC clamp loader complex which loads the PCNA sliding clamp onto DNA. The sequence is that of Replication factor C small subunit from Thermoplasma volcanium (strain ATCC 51530 / DSM 4299 / JCM 9571 / NBRC 15438 / GSS1).